The chain runs to 660 residues: Acyl-coenzyme A oxidase acox-1.3 (660 aa).

FAD-binding positions include 146–149 (YAQT), 154–155 (GT), and G188. Substrate is bound by residues 282 to 285 (KIGY) and R292. FAD is bound by residues R317 and 337-340 (QQHR). Positions 339, 389, 393, and 401 each coordinate ATP. 430 to 431 (YE) is a substrate binding site. The active-site Proton acceptor is E431. E433 lines the FAD pocket. ATP-binding positions include 524 to 527 (RASR) and Y572. Positions 658 to 660 (AKL) match the Microbody targeting signal motif.

It belongs to the acyl-CoA oxidase family. Forms a heterodimer with acox-1.1; the interaction may be important for the stability of acox-1.3. FAD is required as a cofactor.

It localises to the peroxisome. The enzyme catalyses asc-C7-CoA + O2 = asc-DeltaC7-CoA + H2O2. It functions in the pathway lipid metabolism; peroxisomal fatty acid beta-oxidation. With respect to regulation, activated by ATP. ATP binding leads to a conformational change that promotes FAD cofactor binding and enzyme activity. ATP binding likely occurs during acox-1.3 folding and/or dimer formation. Functionally, involved in the first step of peroxisomal beta-oxidation by catalyzing the desaturation of fatty acid-derived side chains of ascaroside pheromones, which regulates development and behavior. Specifically, shortens ascarosides with a 7-carbon side chain (asc-C7). Does not catalyze the desaturation of fatty acids or hydroxylated fatty acids. Involved in the biosynthesis of asc-C6-MK (daumone 2) and asc-delta-C9 (daumone 3) but not asc-C7 (daumone 1); daumones are pheromones produced during unfavourable growth conditions which promote entry into the dauer stage. The sequence is that of Acyl-coenzyme A oxidase acox-1.3 from Caenorhabditis elegans.